Consider the following 590-residue polypeptide: Aspartate--tRNA ligase (590 aa).

L-aspartate is bound at residue glutamate 174. Residues 198 to 201 (QLMK) are aspartate. Arginine 220 serves as a coordination point for L-aspartate. ATP-binding positions include 220-222 (RDE) and glutamine 229. An L-aspartate-binding site is contributed by histidine 443. Residue glutamate 484 participates in ATP binding. Arginine 491 is a binding site for L-aspartate. An ATP-binding site is contributed by 536-539 (GLDR).

This sequence belongs to the class-II aminoacyl-tRNA synthetase family. Type 1 subfamily. In terms of assembly, homodimer.

The protein localises to the cytoplasm. The catalysed reaction is tRNA(Asp) + L-aspartate + ATP = L-aspartyl-tRNA(Asp) + AMP + diphosphate. Catalyzes the attachment of L-aspartate to tRNA(Asp) in a two-step reaction: L-aspartate is first activated by ATP to form Asp-AMP and then transferred to the acceptor end of tRNA(Asp). This Lactococcus lactis subsp. cremoris (strain MG1363) protein is Aspartate--tRNA ligase.